Consider the following 151-residue polypeptide: Aspartate carbamoyltransferase regulatory chain (151 aa).

Positions 108, 113, 138, and 141 each coordinate Zn(2+).

The protein belongs to the PyrI family. Contains catalytic and regulatory chains. The cofactor is Zn(2+).

Functionally, involved in allosteric regulation of aspartate carbamoyltransferase. This Pyrobaculum arsenaticum (strain DSM 13514 / JCM 11321 / PZ6) protein is Aspartate carbamoyltransferase regulatory chain.